Here is a 208-residue protein sequence, read N- to C-terminus: Putative RING finger protein 413R (208 aa).

The disordered stretch occupies residues 1-87 (MDAIFYPLPI…RHWSDDDSDR (87 aa)). Residues 22-71 (DFQEEDFQEEDFQEEDFQEEDFQEEDEDEEDEEVNEYPSDLDDEYPDSDY) show a composition bias toward acidic residues. Residues 72-82 (YDERSDRHWSD) are compositionally biased toward basic and acidic residues. Residues 83–147 (DDSDRDLDDL…KLTTLSKNLT (65 aa)) adopt a coiled-coil conformation. Residues 148-196 (CIICLTNQVQILTIPCGHLIMCNPCSLNLNNSVCTRGVNSNYEKCPKCR) form an RING-type zinc finger.

The polypeptide is Putative RING finger protein 413R (EF2) (Acheta domesticus (House cricket)).